The chain runs to 424 residues: MVFVACGLNHKTAPIHVREKVALQPAMQDSLLSSLLDLPEVNEAAILSTCNRTEIYCDTNTPEVLGNWLAHEHQLSEELLSQFLYIHQGKEGIKHTLRVASGLDSMMIGEPQILGQMKQAYQHACRLGTVKTQLRPVFEYIFRASKRIRTRSGIGANPVSIAYAAVQLIGQLFKNYHSLSVFLIGSGETASLVAKYLHQHGVHRFLIASRTLENAQKLAETFDGKTLSIGDIPQYLPLADVVISATACPLPFINKSLVEHALEQRNHAPMFLLDLAVPRDIEGNVNELEQVHLYNVDDLQSMIEKGMDERRNAALQAEQLIESELDNYIRWHRSLRAKDVICDYRNQMHTLAQQELQRALKKISAGQNQQDVLNEFSMRLVNKLTHNPTIGLRQMAWDNREDLLDLARYLFDTTANQSLYEEIS.

Substrate-binding positions include 49–52, serine 105, 110–112, and glutamine 116; these read TCNR and EPQ. Cysteine 50 functions as the Nucleophile in the catalytic mechanism. 185–190 provides a ligand contact to NADP(+); that stretch reads GSGETA.

This sequence belongs to the glutamyl-tRNA reductase family. Homodimer.

It catalyses the reaction (S)-4-amino-5-oxopentanoate + tRNA(Glu) + NADP(+) = L-glutamyl-tRNA(Glu) + NADPH + H(+). It participates in porphyrin-containing compound metabolism; protoporphyrin-IX biosynthesis; 5-aminolevulinate from L-glutamyl-tRNA(Glu): step 1/2. Catalyzes the NADPH-dependent reduction of glutamyl-tRNA(Glu) to glutamate 1-semialdehyde (GSA). This is Glutamyl-tRNA reductase from Legionella pneumophila (strain Lens).